Here is a 606-residue protein sequence, read N- to C-terminus: Proton myo-inositol cotransporter hmit-1.1 (606 aa).

Over 1-20 (MVAVAAFSSSGQDKPAHTPK) the chain is Cytoplasmic. A helical transmembrane segment spans residues 21 to 41 (LGLFVYILAAASVIGGFLFGY). At 42 to 63 (DTSVVSAAMLYMPDAPGLKPMD) the chain is on the extracellular side. A helical transmembrane segment spans residues 64–84 (TVWQEVLVSISPGMAAVGSLM). Topologically, residues 85 to 96 (SGTSSDYIGRRK) are cytoplasmic. Residues 97–117 (VILGASAIFTIGALVCAASVN) traverse the membrane as a helical segment. Lys118 is a topological domain (extracellular). A helical membrane pass occupies residues 119–139 (IMLLVGRVLLGIAIGFASMIV). Over 140–152 (PVYLGETAPTHVR) the chain is Cytoplasmic. A helical transmembrane segment spans residues 153–173 (GMLVAAFALMISFGQVVANIT). Residues 174 to 188 (GGAFSYIDPYNVGWR) lie on the Extracellular side of the membrane. A helical membrane pass occupies residues 189 to 209 (LMFAFAAVPSIIQFVCFMFLP). The Cytoplasmic portion of the chain corresponds to 210–278 (ETPRWLYENG…RILKTPHVLK (69 aa)). A helical membrane pass occupies residues 279–299 (ACFIGSMLQAFQQLAGINTIL). Topologically, residues 300–317 (YYTADIIRSSGISNNHTT) are extracellular. N-linked (GlcNAc...) asparagine glycosylation occurs at Asn314. The helical transmembrane segment at 318-338 (IWISVLLSLCNFIGPFVPMSL) threads the bilayer. Residues 339-345 (IEKVGRR) are Cytoplasmic-facing. The helical transmembrane segment at 346 to 366 (IIFLFSCGLVVLSLVFIGVAF) threads the bilayer. The Extracellular portion of the chain corresponds to 367–464 (LLVNHDSAAT…EKYYCDTKYT (98 aa)). 2 N-linked (GlcNAc...) asparagine glycosylation sites follow: Asn387 and Asn445. Residues 465–485 (LLPIIACGVYLLTFSSGFTSL) form a helical membrane-spanning segment. Over 486–501 (PWVLNSEFYPMWARST) the chain is Cytoplasmic. The chain crosses the membrane as a helical span at residues 502 to 522 (CVAISTTSNWVFNLIIALTYL). Topologically, residues 523–531 (SLTQVIGKY) are extracellular. A helical transmembrane segment spans residues 532–552 (GAFWLYAGLTVIAFIFILFLV). Residues 553-606 (PETKGYSIEEVEMLFMNKKQRREAESRRRETVTEVRSRMNSTVSFGQHNEVHKY) lie on the Cytoplasmic side of the membrane.

This sequence belongs to the major facilitator superfamily. Sugar transporter (TC 2.A.1.1) family. Expressed in the intestine.

It localises to the cell membrane. It carries out the reaction myo-inositol(out) + H(+)(out) = myo-inositol(in) + H(+)(in). H(+)-myo-inositol cotransporter. Probably by promoting the transport of myo-inositol regulates intracellular osmosis in response to hyperosmotic stress. The polypeptide is Proton myo-inositol cotransporter hmit-1.1 (Caenorhabditis elegans).